A 230-amino-acid polypeptide reads, in one-letter code: Demethylmenaquinone methyltransferase (230 aa).

Residues threonine 62, aspartate 80, 100–101 (DG), and serine 117 each bind S-adenosyl-L-methionine.

This sequence belongs to the class I-like SAM-binding methyltransferase superfamily. MenG/UbiE family.

The catalysed reaction is a 2-demethylmenaquinol + S-adenosyl-L-methionine = a menaquinol + S-adenosyl-L-homocysteine + H(+). Its pathway is quinol/quinone metabolism; menaquinone biosynthesis; menaquinol from 1,4-dihydroxy-2-naphthoate: step 2/2. Its function is as follows. Methyltransferase required for the conversion of demethylmenaquinol (DMKH2) to menaquinol (MKH2). The sequence is that of Demethylmenaquinone methyltransferase from Corynebacterium glutamicum (strain R).